The sequence spans 835 residues: Cap-specific mRNA (nucleoside-2'-O-)-methyltransferase 1 (835 aa).

A Bipartite nuclear localization signal motif is present at residues 2-19 (RRRNDPECTAPIKKQKKR). Residues 24 to 68 (ALNLSAASGDEPPSSVNHAAKASTTSLSGSDSETEGKQHGSDSFD) form a disordered region. Ser-28, Ser-31, Ser-53, Ser-66, and Ser-91 each carry phosphoserine. A compositionally biased stretch (polar residues) spans 37–54 (SSVNHAAKASTTSLSGSD). The segment covering 57–68 (TEGKQHGSDSFD) has biased composition (basic and acidic residues). Residues 87-133 (YNSVSQKLMAKMGFREGEGLGKYSQGRKDIVEASNQKGRRGLGLTLQ) enclose the G-patch domain. N6-acetyllysine is present on Lys-108. Residues 203–207 (KSVFD) and Arg-218 each bind substrate. Residues 231 to 450 (FFLNRAAMKM…ERYVVCKGLK (220 aa)) enclose the RrmJ-type SAM-dependent 2'-O-MTase domain. Asn-234 is a binding site for S-adenosyl-L-methionine. Residue Lys-239 is part of the active site. Residues 277 to 283 (CAGPGGF) and 335 to 336 (DI) each bind S-adenosyl-L-methionine. The active site involves Asp-364. 374-376 (NLQ) serves as a coordination point for substrate. The Proton acceptor role is filled by Lys-404. Asn-439 provides a ligand contact to substrate. Residues 727–835 (SSGTPKLSYT…VLSFIQTHSA (109 aa)) form an interaction with POLR2A region. In terms of domain architecture, WW spans 752–786 (RTVNEPWTMGFSKSFKRKFFYNKKTKISTFDLPAD).

Interacts with POLR2A (via C-terminus).

Its subcellular location is the nucleus. It carries out the reaction a 5'-end (N(7)-methyl 5'-triphosphoguanosine)-ribonucleoside in mRNA + S-adenosyl-L-methionine = a 5'-end (N(7)-methyl 5'-triphosphoguanosine)-(2'-O-methyl-ribonucleoside) in mRNA + S-adenosyl-L-homocysteine + H(+). Functionally, S-adenosyl-L-methionine-dependent methyltransferase that mediates mRNA cap1 2'-O-ribose methylation to the 5'-cap structure of mRNAs. Methylates the ribose of the first nucleotide of a m(7)GpppG-capped mRNA and small nuclear RNA (snRNA) to produce m(7)GpppRm (cap1). Displays a preference for cap0 transcripts. Cap1 modification is linked to higher levels of translation. May be involved in the interferon response pathway. The polypeptide is Cap-specific mRNA (nucleoside-2'-O-)-methyltransferase 1 (CMTR1) (Ailuropoda melanoleuca (Giant panda)).